Reading from the N-terminus, the 178-residue chain is Oligoribonuclease (178 aa).

One can recognise an Exonuclease domain in the interval 7–168 (LIWIDLEMTG…DDIRESIAEL (162 aa)). Residue tyrosine 128 is part of the active site.

The protein belongs to the oligoribonuclease family.

The protein localises to the cytoplasm. Its function is as follows. 3'-to-5' exoribonuclease specific for small oligoribonucleotides. This Francisella tularensis subsp. holarctica (strain OSU18) protein is Oligoribonuclease.